The sequence spans 553 residues: Ubiquitin carboxyl-terminal hydrolase 17-like protein 15 (553 aa).

The USP domain occupies 80-375 (AGLQNMGNTC…QAYVLFYIQK (296 aa)). The Nucleophile role is filled by C89. The active-site Proton acceptor is the H334. Basic and acidic residues-rich tracts occupy residues 382-392 (SESVSRGREPR) and 398-413 (DTDRRATQGELKRDHP). Disordered stretches follow at residues 382–413 (SESVSRGREPRALGAEDTDRRATQGELKRDHP) and 491–524 (STTPTHQESMNTGTLASLRGRARRSKGKNKHSKR). Polar residues predominate over residues 496–505 (HQESMNTGTL). Positions 510–524 (GRARRSKGKNKHSKR) are enriched in basic residues.

This sequence belongs to the peptidase C19 family. USP17 subfamily.

The protein resides in the nucleus. Its subcellular location is the endoplasmic reticulum. The catalysed reaction is Thiol-dependent hydrolysis of ester, thioester, amide, peptide and isopeptide bonds formed by the C-terminal Gly of ubiquitin (a 76-residue protein attached to proteins as an intracellular targeting signal).. Its function is as follows. Deubiquitinating enzyme that removes conjugated ubiquitin from specific proteins to regulate different cellular processes that may include cell proliferation, progression through the cell cycle, apoptosis, cell migration, and the cellular response to viral infection. The sequence is that of Ubiquitin carboxyl-terminal hydrolase 17-like protein 15 (USP17L15) from Homo sapiens (Human).